The following is a 423-amino-acid chain: MSIQIPRGTQDILPGTVELWQYIEGQAREICRRYNYKEIRTPIFEHTELFLRGVGDTTDIVQKEMYSFQDRGERSLTLRPEGTAPVVRSYVENKMFGDATQPTKLYYIGQMFRYERPQAGRYRQFVQFGIEAIGSNDPAIDAEVIALAVEFYRGMGLKNIKVVLNSLGDAASRQAHRDALIAHFEPRIGEFCSDCQSRLEKNPLRILDCKKDRNHELMGTAPSITEYLNEDSAVYYDKVQELLTMMDVPFEKDPNLVRGLDYYQHTVFEIMSEAEGFGAITTLSGGGRYNGLVQEIGGPEMPGIGFAMSIERLIMALKAENIELPIEHSIDCYVVALGEKAKDHAAKVAFDLRKAGLAVEKDYLDRKMKAQFKSADRLKAKFVAVLGEDELDKGIINLKDMATGEQEEVALDVFASYVAEKLI.

Belongs to the class-II aminoacyl-tRNA synthetase family. As to quaternary structure, homodimer.

It localises to the cytoplasm. The enzyme catalyses tRNA(His) + L-histidine + ATP = L-histidyl-tRNA(His) + AMP + diphosphate + H(+). In Bacillus anthracis, this protein is Histidine--tRNA ligase 2.